A 210-amino-acid chain; its full sequence is Large ribosomal subunit protein uL3 (210 aa).

Positions 125–154 are disordered; the sequence is RHGFRGGPKTHGQSDRHRAPGSIGAGTTPG.

The protein belongs to the universal ribosomal protein uL3 family. In terms of assembly, part of the 50S ribosomal subunit. Forms a cluster with proteins L14 and L19.

In terms of biological role, one of the primary rRNA binding proteins, it binds directly near the 3'-end of the 23S rRNA, where it nucleates assembly of the 50S subunit. The polypeptide is Large ribosomal subunit protein uL3 (Chloroflexus aggregans (strain MD-66 / DSM 9485)).